Reading from the N-terminus, the 522-residue chain is MARSRAFAFALLICAVAASCHVALSAPPPYAKQVERDFLTCLTKDIPPRQLYAKSSPAYASVWSSTVRNIKFLSDKTVKPLYIITPTNASHIQAAVVCGRRHGMRIRVRSGGHDYEGLSYRSEKPEPFAVVDMNKMRAVSIDGKAATAWVDSGAQLGDLYYGIAKASPKLGFPAGVCTTIGVGGHFSGGGFGMLLRKYGTAADNVIDAKVVDAQGRLLDRKAMGEDHFWAIRGGGGESFGIVASWQVKLLPVPPKVTVFQVHKGIKEGAIDLVTKWQTVAPALPDDLMIRIMAMGQGAMFEALYLGTCKDLVLLMTARFPELGMNATHCKEMTWIESVPYIPMGPKGTVRDLLNRTSNIKAFGKYKSDYVLEPIPKSDWEKIFTWLVKPGAGVMIMDPYGGGIASVPESATPFPRRSGVLFNIQYVVYWFGEGAAALPTQWTRDIYDFMTPYVSKNPRQAYVNYRDLDLGVNQVVGNVSTYASGKVWGEKYFKGNFERLARTKGKIDPEDYFRNEQSIPPLL.

The N-terminal stretch at 1–25 is a signal peptide; that stretch reads MARSRAFAFALLICAVAASCHVALS. C41 and C98 are oxidised to a cystine. An FAD-binding PCMH-type domain is found at 76 to 252; the sequence is KTVKPLYIIT…ASWQVKLLPV (177 aa). The N-linked (GlcNAc...) asparagine glycan is linked to N88. Residues 108–114, S119, S152, 176–177, 181–185, F191, E237, and V242 each bind FAD; these read VRSGGHD, VC, and GVGGH. Residues 113–177 constitute a cross-link (6-(S-cysteinyl)-8alpha-(pros-histidyl)-FAD (His-Cys)); the sequence is HDYEGLSYRS…PKLGFPAGVC (65 aa). A disulfide bridge links C308 with C329. N-linked (GlcNAc...) asparagine glycans are attached at residues N325 and N354. An FAD-binding site is contributed by 461 to 465; it reads YVNYR. N477 is a glycosylation site (N-linked (GlcNAc...) asparagine).

This sequence belongs to the oxygen-dependent FAD-linked oxidoreductase family. In terms of assembly, monomer. The cofactor is FAD. Post-translationally, the FAD cofactor is bound via a bicovalent 6-S-cysteinyl, 8alpha-N1-histidyl FAD linkage. In terms of processing, the N-terminus is blocked. Glycosylated. N-glycosylated. Contains fucose, N-acetylglucosamine, and mannose as main carbohydrates (in a ratio of approximately 3:2:1), and a minute amount of xylose. The two most abundant oligosaccharides are Fuc(1)GlcNAc(2)Man(3) and Fuc(1)GlcNAc(2)Man(2), together comprising about 80% of the total carbohydrate content. They are structurally unusual in having a L-Fuc alpha-(1,3)-linked to Asn-linked GlcNAc without a Xyl beta-(1,2)-linked to the branching Man. The other oligosaccharides make up only 9% of the total carbohydrate content and are characterized by the presence of Xyl beta-(1,2)-linked to the branching Man. In terms of tissue distribution, expressed in pollen (at protein level).

This is Berberine bridge enzyme-like Cyn d 4 from Cynodon dactylon (Bermuda grass).